The primary structure comprises 1584 residues: Cilia- and flagella-associated protein 74 (1584 aa).

The stretch at 300-379 forms a coiled coil; sequence RKFQAWDRAK…EAEEEKRKKQ (80 aa). Over residues 692 to 706 the composition is skewed to polar residues; the sequence is SEQQLEGTESSQADM. The disordered stretch occupies residues 692-739; that stretch reads SEQQLEGTESSQADMQSRKELEKLDKEQEEEQPAEPERLTTVIPPSEE. Residues 707 to 717 show a composition bias toward basic and acidic residues; sequence QSRKELEKLDK.

This sequence belongs to the CFAP74 family.

The protein resides in the cytoplasm. It is found in the cytoskeleton. The protein localises to the cilium axoneme. It localises to the flagellum axoneme. Its function is as follows. As part of the central apparatus of the cilium axoneme may play a role in cilium movement. May play an important role in sperm architecture and function. This chain is Cilia- and flagella-associated protein 74, found in Homo sapiens (Human).